The chain runs to 425 residues: Protein CLP1 homolog (425 aa).

ATP-binding positions include glutamate 18, lysine 59, and 121 to 126 (DVGKST).

It belongs to the Clp1 family. Clp1 subfamily.

It localises to the nucleus. Required for endonucleolytic cleavage during polyadenylation-dependent pre-mRNA 3'-end formation. The protein is Protein CLP1 homolog (cbc) of Drosophila pseudoobscura pseudoobscura (Fruit fly).